A 1226-amino-acid polypeptide reads, in one-letter code: 3-hydroxy-3-methylglutaryl-coenzyme A reductase (1226 aa).

5 consecutive transmembrane segments (helical) span residues 17–37 (IETIVSVFVLATLAYFHILSG), 224–244 (ILVVLTGYILMHVTFMRLFLA), 252–272 (FWLSAGIFSSATISFLFTLPM), 337–357 (VGNMILRDYALEIAVLFVGVN), and 373–393 (LLAMDRLMTFTLYTAVLTIMV). One can recognise an SSD domain in the interval 223–391 (DILVVLTGYI…FTLYTAVLTI (169 aa)). The disordered stretch occupies residues 428–449 (LSRKSSKQSVTEPETTKNLRQR). The segment covering 434-445 (KQSVTEPETTKN) has biased composition (polar residues). The chain crosses the membrane as a helical span at residues 481-501 (LLLIASFLTLHILNFCTTLTS). 2 disordered regions span residues 683–702 (APAPAPAPEPEPPVNRPPPL) and 722–742 (LPIRSPPPVEPITPESREVEP). A compositionally biased stretch (pro residues) spans 685–702 (APAPAPEPEPPVNRPPPL). Glu869 (charge relay system) is an active-site residue. CoA is bound at residue 875–881 (STSRGCK). Residues 936-938 (SRF) and 963-971 (DAMGMNMIS) each bind NADP(+). Catalysis depends on Lys1001, which acts as the Charge relay system. 1030 to 1032 (VLK) is a binding site for CoA. Asp1077 serves as the catalytic Charge relay system. Residues 1150–1170 (IIASAVMAGELSLISALAAGH) traverse the membrane as a helical segment. 1174–1175 (AH) provides a ligand contact to CoA. Catalysis depends on His1175, which acts as the Proton donor. 1179–1180 (NR) contacts NADP(+). The disordered stretch occupies residues 1182-1226 (QLNTPMPSRPHTPGPEDVSHVQQLPTPSASDDKGVTAQGYVVEAK). Residues 1201–1210 (HVQQLPTPSA) show a composition bias toward polar residues.

The protein belongs to the HMG-CoA reductase family.

The protein resides in the endoplasmic reticulum membrane. The catalysed reaction is (R)-mevalonate + 2 NADP(+) + CoA = (3S)-3-hydroxy-3-methylglutaryl-CoA + 2 NADPH + 2 H(+). It functions in the pathway metabolic intermediate biosynthesis; (R)-mevalonate biosynthesis; (R)-mevalonate from acetyl-CoA: step 3/3. In terms of biological role, HMG-CoA reductase; part of the first module of ergosterol biosynthesis pathway that includes the early steps of the pathway, conserved across all eukaryotes, and which results in the formation of mevalonate from acetyl-coenzyme A (acetyl-CoA). This module also plays a key role in the biosynthesis of triterpenes such as ganoderic acids (GA), a group of highly oxygenated lanostane-type triterpenoids which are well recognized as a main group of unique bioactive compounds in the medicinal mushroom Ganoderma lucidum. In this module, the acetyl-CoA acetyltransferase catalyzes the formation of acetoacetyl-CoA. The hydroxymethylglutaryl-CoA synthase HMGS then condenses acetyl-CoA with acetoacetyl-CoA to form HMG-CoA. The rate-limiting step of the early module is the reduction to mevalonate by the 3-hydroxy-3-methylglutaryl-coenzyme A (HMG-CoA) reductase. The polypeptide is 3-hydroxy-3-methylglutaryl-coenzyme A reductase (Ganoderma lucidum (Ling zhi medicinal fungus)).